A 200-amino-acid polypeptide reads, in one-letter code: MQSSPLLENLVEHLRCLPGVGPKSAQRMAYHLLQRDRSGGMNLARALTDAMSKIGHCSQCRTFTEQETCAICDNPRRQHSGLLCVVEMPADIQAIEQTGQFSGRYFVLMGHLSPLDGIGPREIGLDLLQQRLQNEHFHEVILATNPTIEGDATANYIAEMCMQRNIKVSRIAHGIPVGGELETVDGTTLTHSFLGRRELG.

The segment at 57-72 (CSQCRTFTEQETCAIC) adopts a C4-type zinc-finger fold. The Toprim domain maps to 81-176 (GLLCVVEMPA…KVSRIAHGIP (96 aa)).

It belongs to the RecR family.

In terms of biological role, may play a role in DNA repair. It seems to be involved in an RecBC-independent recombinational process of DNA repair. It may act with RecF and RecO. The polypeptide is Recombination protein RecR (Actinobacillus succinogenes (strain ATCC 55618 / DSM 22257 / CCUG 43843 / 130Z)).